We begin with the raw amino-acid sequence, 429 residues long: Serine hydroxymethyltransferase (429 aa).

Residues L127 and 131 to 133 (GHL) each bind (6S)-5,6,7,8-tetrahydrofolate. K236 is modified (N6-(pyridoxal phosphate)lysine). E252 is a binding site for (6S)-5,6,7,8-tetrahydrofolate.

This sequence belongs to the SHMT family. In terms of assembly, homodimer. Pyridoxal 5'-phosphate is required as a cofactor.

The protein localises to the cytoplasm. The enzyme catalyses (6R)-5,10-methylene-5,6,7,8-tetrahydrofolate + glycine + H2O = (6S)-5,6,7,8-tetrahydrofolate + L-serine. It participates in one-carbon metabolism; tetrahydrofolate interconversion. The protein operates within amino-acid biosynthesis; glycine biosynthesis; glycine from L-serine: step 1/1. In terms of biological role, catalyzes the reversible interconversion of serine and glycine with tetrahydrofolate (THF) serving as the one-carbon carrier. This reaction serves as the major source of one-carbon groups required for the biosynthesis of purines, thymidylate, methionine, and other important biomolecules. Also exhibits THF-independent aldolase activity toward beta-hydroxyamino acids, producing glycine and aldehydes, via a retro-aldol mechanism. In Rhodospirillum centenum (strain ATCC 51521 / SW), this protein is Serine hydroxymethyltransferase.